Reading from the N-terminus, the 290-residue chain is 4-hydroxybenzoate octaprenyltransferase (290 aa).

8 helical membrane passes run 21–41 (IGTL…VKGM), 44–64 (LSIL…GCVI), 84–104 (LATG…LVFC), 106–126 (FILV…AVFL), 142–162 (LFLG…SIEA), 212–232 (IISL…YLSQ), 235–255 (TSYF…CKLI), and 267–287 (FLNN…GIFF).

This sequence belongs to the UbiA prenyltransferase family. Requires Mg(2+) as cofactor.

It is found in the cell inner membrane. It carries out the reaction all-trans-octaprenyl diphosphate + 4-hydroxybenzoate = 4-hydroxy-3-(all-trans-octaprenyl)benzoate + diphosphate. It participates in cofactor biosynthesis; ubiquinone biosynthesis. In terms of biological role, catalyzes the prenylation of para-hydroxybenzoate (PHB) with an all-trans polyprenyl group. Mediates the second step in the final reaction sequence of ubiquinone-8 (UQ-8) biosynthesis, which is the condensation of the polyisoprenoid side chain with PHB, generating the first membrane-bound Q intermediate 3-octaprenyl-4-hydroxybenzoate. The sequence is that of 4-hydroxybenzoate octaprenyltransferase from Pasteurella multocida (strain Pm70).